An 804-amino-acid chain; its full sequence is Type 2 DNA topoisomerase 6 subunit B (804 aa).

ATP is bound by residues N58, D89, 110–111 (SR), 120–127 (GQQGIGIS), and K629.

It belongs to the TOP6B family. As to quaternary structure, homodimer. Heterotetramer of two Top6A and two Top6B chains.

It carries out the reaction ATP-dependent breakage, passage and rejoining of double-stranded DNA.. Its function is as follows. Relaxes both positive and negative superturns and exhibits a strong decatenase activity. This is Type 2 DNA topoisomerase 6 subunit B from Halobacterium salinarum (strain ATCC 29341 / DSM 671 / R1).